The chain runs to 118 residues: Small ribosomal subunit protein uS13 (118 aa).

The interval 94-118 is disordered; the sequence is GLPVRGQRTRTNARTRKGPRKAIKK.

The protein belongs to the universal ribosomal protein uS13 family. In terms of assembly, part of the 30S ribosomal subunit. Forms a loose heterodimer with protein S19. Forms two bridges to the 50S subunit in the 70S ribosome.

Located at the top of the head of the 30S subunit, it contacts several helices of the 16S rRNA. In the 70S ribosome it contacts the 23S rRNA (bridge B1a) and protein L5 of the 50S subunit (bridge B1b), connecting the 2 subunits; these bridges are implicated in subunit movement. Contacts the tRNAs in the A and P-sites. The protein is Small ribosomal subunit protein uS13 of Thiobacillus denitrificans (strain ATCC 25259 / T1).